Reading from the N-terminus, the 315-residue chain is tRNA dimethylallyltransferase (315 aa).

Residue 13–20 (GPTASGKT) participates in ATP binding. 15 to 20 (TASGKT) contributes to the substrate binding site. 4 interaction with substrate tRNA regions span residues 38–41 (DSAL), 162–166 (QRLSR), 243–248 (RCVGYR), and 276–283 (KRQITWLR).

Belongs to the IPP transferase family. As to quaternary structure, monomer. It depends on Mg(2+) as a cofactor.

It catalyses the reaction adenosine(37) in tRNA + dimethylallyl diphosphate = N(6)-dimethylallyladenosine(37) in tRNA + diphosphate. In terms of biological role, catalyzes the transfer of a dimethylallyl group onto the adenine at position 37 in tRNAs that read codons beginning with uridine, leading to the formation of N6-(dimethylallyl)adenosine (i(6)A). This Vibrio cholerae serotype O1 (strain ATCC 39541 / Classical Ogawa 395 / O395) protein is tRNA dimethylallyltransferase.